The chain runs to 339 residues: ATP-dependent 6-phosphofructokinase (339 aa).

ATP-binding positions include G11, 72-73, and 102-105; these read RY and GDGS. A Mg(2+)-binding site is contributed by D103. Substrate contacts are provided by residues 125 to 127, R162, and 169 to 171; these read TID and MGR. D127 serves as the catalytic Proton acceptor. ADP is bound by residues 185-187 and 214-216; these read GAD and KSH. Residues E223, R245, and 251-254 contribute to the substrate site; that span reads HVIR.

Belongs to the phosphofructokinase type A (PFKA) family. ATP-dependent PFK group I subfamily. Prokaryotic clade 'B1' sub-subfamily. In terms of assembly, homotetramer. Mg(2+) serves as cofactor.

It localises to the cytoplasm. It catalyses the reaction beta-D-fructose 6-phosphate + ATP = beta-D-fructose 1,6-bisphosphate + ADP + H(+). The protein operates within carbohydrate degradation; glycolysis; D-glyceraldehyde 3-phosphate and glycerone phosphate from D-glucose: step 3/4. Its activity is regulated as follows. Allosterically activated by ADP and other diphosphonucleosides, and allosterically inhibited by phosphoenolpyruvate. Its function is as follows. Catalyzes the phosphorylation of D-fructose 6-phosphate to fructose 1,6-bisphosphate by ATP, the first committing step of glycolysis. In Streptococcus thermophilus (strain ATCC BAA-491 / LMD-9), this protein is ATP-dependent 6-phosphofructokinase.